Consider the following 176-residue polypeptide: MDLPAPIHDFLLVFLGLGLIVGGLGVVLLTNPIYSAFSLGLVLVCISLFHIPANSHFVAAAQLLIYVGAINVLIVFAVMFMNGSEYYNDFHLWTVGDGVTSLVCTSIFVSLITTISDTSWYGIIWTTRSNQIIEQDLINKGQQLGIHLSTDFFLPFELISIILLVALIGAIAMARQ.

Helical transmembrane passes span 10–30 (FLLV…VLLT), 33–53 (IYSA…HIPA), 61–81 (AQLL…VMFM), 92–112 (LWTV…VSLI), and 152–172 (FFLP…GAIA).

Belongs to the complex I subunit 6 family. In terms of assembly, NDH is composed of at least 16 different subunits, 5 of which are encoded in the nucleus.

It is found in the plastid. Its subcellular location is the chloroplast thylakoid membrane. It carries out the reaction a plastoquinone + NADH + (n+1) H(+)(in) = a plastoquinol + NAD(+) + n H(+)(out). The catalysed reaction is a plastoquinone + NADPH + (n+1) H(+)(in) = a plastoquinol + NADP(+) + n H(+)(out). Functionally, NDH shuttles electrons from NAD(P)H:plastoquinone, via FMN and iron-sulfur (Fe-S) centers, to quinones in the photosynthetic chain and possibly in a chloroplast respiratory chain. The immediate electron acceptor for the enzyme in this species is believed to be plastoquinone. Couples the redox reaction to proton translocation, and thus conserves the redox energy in a proton gradient. This Nandina domestica (Heavenly bamboo) protein is NAD(P)H-quinone oxidoreductase subunit 6, chloroplastic (ndhG).